The following is a 284-amino-acid chain: Phosphate import ATP-binding protein PstB 2 (284 aa).

Residues 1-22 are compositionally biased toward polar residues; sequence MTLLSTLRGISSPARQQPGTQS. A disordered region spans residues 1-29; the sequence is MTLLSTLRGISSPARQQPGTQSESRRGGD. Residues 36–278 enclose the ABC transporter domain; the sequence is LAVAGVSHGF…PDDARARKFI (243 aa). 68–75 provides a ligand contact to ATP; the sequence is GPSGTGKT.

Belongs to the ABC transporter superfamily. Phosphate importer (TC 3.A.1.7) family. The complex is composed of two ATP-binding proteins (PstB), two transmembrane proteins (PstC and PstA) and a solute-binding protein (PstS).

It localises to the cell membrane. The enzyme catalyses phosphate(out) + ATP + H2O = ADP + 2 phosphate(in) + H(+). Part of the ABC transporter complex PstSACB involved in phosphate import. Responsible for energy coupling to the transport system. The chain is Phosphate import ATP-binding protein PstB 2 from Natronomonas pharaonis (strain ATCC 35678 / DSM 2160 / CIP 103997 / JCM 8858 / NBRC 14720 / NCIMB 2260 / Gabara) (Halobacterium pharaonis).